Here is a 642-residue protein sequence, read N- to C-terminus: Threonine--tRNA ligase (642 aa).

Residues 1-61 (MPVITLPDGS…ENDATLSIIT (61 aa)) form the TGS domain. The tract at residues 243-534 (DHRKIGKQLD…LTEEFAGFFP (292 aa)) is catalytic. Positions 334, 385, and 511 each coordinate Zn(2+).

It belongs to the class-II aminoacyl-tRNA synthetase family. As to quaternary structure, homodimer. Zn(2+) serves as cofactor.

The protein localises to the cytoplasm. It catalyses the reaction tRNA(Thr) + L-threonine + ATP = L-threonyl-tRNA(Thr) + AMP + diphosphate + H(+). Its function is as follows. Catalyzes the attachment of threonine to tRNA(Thr) in a two-step reaction: L-threonine is first activated by ATP to form Thr-AMP and then transferred to the acceptor end of tRNA(Thr). Also edits incorrectly charged L-seryl-tRNA(Thr). The polypeptide is Threonine--tRNA ligase (Salmonella paratyphi A (strain ATCC 9150 / SARB42)).